The sequence spans 179 residues: Ferric nitrobindin-like protein (179 aa).

A GXWXGXG motif is present at residues 17-23 (GRWEGLG).

It belongs to the nitrobindin family.

The polypeptide is Ferric nitrobindin-like protein (Thermobifida fusca (strain YX)).